A 78-amino-acid polypeptide reads, in one-letter code: Sec-independent protein translocase protein TatA (78 aa).

A helical transmembrane segment spans residues 1–21 (MGGISIWQLLIVALIVVLLFG). The segment at 40–78 (KSAMSSEEEKKAIEDSASEKTAQTEEKKTESKDKDKEQV) is disordered. Residues 46–78 (EEEKKAIEDSASEKTAQTEEKKTESKDKDKEQV) show a composition bias toward basic and acidic residues.

This sequence belongs to the TatA/E family. The Tat system comprises two distinct complexes: a TatABC complex, containing multiple copies of TatA, TatB and TatC subunits, and a separate TatA complex, containing only TatA subunits. Substrates initially bind to the TatABC complex, which probably triggers association of the separate TatA complex to form the active translocon.

It is found in the cell inner membrane. Part of the twin-arginine translocation (Tat) system that transports large folded proteins containing a characteristic twin-arginine motif in their signal peptide across membranes. TatA could form the protein-conducting channel of the Tat system. The chain is Sec-independent protein translocase protein TatA from Shewanella sediminis (strain HAW-EB3).